Consider the following 367-residue polypeptide: Glutamate 5-kinase (367 aa).

K10 contacts ATP. 3 residues coordinate substrate: S50, D137, and N149. ATP contacts are provided by residues 169–170 (TD) and 211–217 (TGGMSTK). The region spanning 275 to 353 (AGEITVDDGA…QQIAEILGYE (79 aa)) is the PUA domain.

The protein belongs to the glutamate 5-kinase family.

The protein resides in the cytoplasm. It carries out the reaction L-glutamate + ATP = L-glutamyl 5-phosphate + ADP. It participates in amino-acid biosynthesis; L-proline biosynthesis; L-glutamate 5-semialdehyde from L-glutamate: step 1/2. In terms of biological role, catalyzes the transfer of a phosphate group to glutamate to form L-glutamate 5-phosphate. The protein is Glutamate 5-kinase of Pectobacterium carotovorum subsp. carotovorum (strain PC1).